The primary structure comprises 78 residues: Putative capsid protein ORF9 (78 aa).

A signal peptide spans 1–29; the sequence is MIKLVLLVAAIAIFGTGFITVIINQFTSA. The helical transmembrane segment at 52–72 threads the bilayer; the sequence is VLFSHPLMLTISSLYIVGFIV.

Belongs to the plectrovirus ORF9 family. In terms of assembly, homomultimerizes.

The protein localises to the virion. It localises to the host membrane. May self assemble to form a helical capsid wrapping up the viral genomic DNA. The virion assembly and budding take place at the host inner membrane. The protein is Putative capsid protein ORF9 of Spiroplasma virus SpV1-C74 (SpV1).